Consider the following 147-residue polypeptide: Large ribosomal subunit protein bL9 (147 aa).

Belongs to the bacterial ribosomal protein bL9 family.

Its function is as follows. Binds to the 23S rRNA. This Bacteroides thetaiotaomicron (strain ATCC 29148 / DSM 2079 / JCM 5827 / CCUG 10774 / NCTC 10582 / VPI-5482 / E50) protein is Large ribosomal subunit protein bL9.